The sequence spans 318 residues: UDP-3-O-acylglucosamine N-acyltransferase (318 aa).

His230 (proton acceptor) is an active-site residue.

This sequence belongs to the transferase hexapeptide repeat family. LpxD subfamily. Homotrimer.

The enzyme catalyses a UDP-3-O-[(3R)-3-hydroxyacyl]-alpha-D-glucosamine + a (3R)-hydroxyacyl-[ACP] = a UDP-2-N,3-O-bis[(3R)-3-hydroxyacyl]-alpha-D-glucosamine + holo-[ACP] + H(+). It participates in bacterial outer membrane biogenesis; LPS lipid A biosynthesis. Catalyzes the N-acylation of UDP-3-O-acylglucosamine using 3-hydroxyacyl-ACP as the acyl donor. Is involved in the biosynthesis of lipid A, a phosphorylated glycolipid that anchors the lipopolysaccharide to the outer membrane of the cell. In Wolinella succinogenes (strain ATCC 29543 / DSM 1740 / CCUG 13145 / JCM 31913 / LMG 7466 / NCTC 11488 / FDC 602W) (Vibrio succinogenes), this protein is UDP-3-O-acylglucosamine N-acyltransferase.